Reading from the N-terminus, the 515-residue chain is Interferon alpha/beta receptor 2 (515 aa).

Positions 1–26 (MLLSQNAFIFRSLNLVLMVYISLVFG) are cleaved as a signal peptide. Residues 27 to 243 (ISYDSPDYTD…QESESAESAK (217 aa)) are Extracellular-facing. 2 disulfides stabilise this stretch: cysteine 39–cysteine 122 and cysteine 85–cysteine 93. N-linked (GlcNAc...) asparagine glycosylation is found at asparagine 58, asparagine 87, asparagine 116, asparagine 188, and asparagine 192. Cysteine 207 and cysteine 227 are disulfide-bonded. A helical membrane pass occupies residues 244 to 264 (IGGIITVFLIALVLTSTIVTL). Residues 265 to 515 (KWIGYICLRN…VDLGDGYIMR (251 aa)) are Cytoplasmic-facing. Disordered stretches follow at residues 318-418 (YDDE…EGSG) and 455-515 (EMVD…YIMR). Tyrosine 337 carries the post-translational modification Phosphotyrosine. Positions 362-375 (PESEEEPDLPEVDV) are enriched in acidic residues. A Phosphoserine modification is found at serine 400. A mediates interaction with STAT2 (and required for the recruitment of USP18) region spans residues 418 to 444 (GGRITFNVDLNSVFLRVLDDEDSDDLE). The segment covering 464 to 488 (NVQSNHLLASGEGTQPTFPSPSSEG) has biased composition (polar residues). Serine 467 carries the post-translational modification Phosphoserine. Tyrosine 512 is subject to Phosphotyrosine.

This sequence belongs to the type II cytokine receptor family. In terms of assembly, heterodimer with IFNAR1; forming the receptor for type I interferon. Interacts with JAK1. Interacts with the transcriptional factors STAT1 and STAT2. Interacts with USP18; indirectly via STAT2, it negatively regulates the assembly of the ternary interferon-IFNAR1-IFNAR2 complex and therefore type I interferon signaling. Phosphorylated on tyrosine residues upon interferon binding. Phosphorylation at Tyr-337 or Tyr-512 are sufficient to mediate interferon dependent activation of STAT1, STAT2 and STAT3 leading to antiproliferative effects on many different cell types. Post-translationally, glycosylated. As to expression, isoform 3 is detected in the urine (at protein level). Expressed in blood cells. Expressed in lymphoblastoid and fibrosarcoma cell lines.

The protein localises to the cell membrane. It is found in the secreted. Its function is as follows. Together with IFNAR1, forms the heterodimeric receptor for type I interferons (including interferons alpha, beta, epsilon, omega and kappa). Type I interferon binding activates the JAK-STAT signaling cascade, resulting in transcriptional activation or repression of interferon-regulated genes that encode the effectors of the interferon response. Mechanistically, type I interferon-binding brings the IFNAR1 and IFNAR2 subunits into close proximity with one another, driving their associated Janus kinases (JAKs) (TYK2 bound to IFNAR1 and JAK1 bound to IFNAR2) to cross-phosphorylate one another. The activated kinases phosphorylate specific tyrosine residues on the intracellular domains of IFNAR1 and IFNAR2, forming docking sites for the STAT transcription factors (STAT1, STAT2 and STAT). STAT proteins are then phosphorylated by the JAKs, promoting their translocation into the nucleus to regulate expression of interferon-regulated genes. In terms of biological role, potent inhibitor of type I IFN receptor activity. This chain is Interferon alpha/beta receptor 2 (IFNAR2), found in Homo sapiens (Human).